The following is a 1958-amino-acid chain: E3 ubiquitin-protein ligase ubr1 (1958 aa).

The UBR-type zinc finger occupies 94–166 (SKCGHIFRKG…GDVSCKIHSH (73 aa)). The RING-type; atypical zinc-finger motif lies at 1182-1334 (CLLCQEELKD…MKEFLCPLCK (153 aa)).

This sequence belongs to the E3 ubiquitin-protein ligase UBR1-like family.

It carries out the reaction S-ubiquitinyl-[E2 ubiquitin-conjugating enzyme]-L-cysteine + [acceptor protein]-L-lysine = [E2 ubiquitin-conjugating enzyme]-L-cysteine + N(6)-ubiquitinyl-[acceptor protein]-L-lysine.. It functions in the pathway protein modification; protein ubiquitination. In terms of biological role, ubiquitin ligase protein which is a component of the N-end rule pathway. Recognizes and binds to proteins bearing specific N-terminal residues that are destabilizing according to the N-end rule, leading to their ubiquitination and subsequent degradation. The polypeptide is E3 ubiquitin-protein ligase ubr1 (ubr1) (Schizosaccharomyces pombe (strain 972 / ATCC 24843) (Fission yeast)).